Reading from the N-terminus, the 356-residue chain is 1-deoxy-D-xylulose 5-phosphate reductoisomerase (356 aa).

Residues T7, G8, S9, I10, G31, N33, and N111 each contribute to the NADPH site. K112 contacts 1-deoxy-D-xylulose 5-phosphate. Residue E113 coordinates NADPH. D131 is a Mn(2+) binding site. S132, E133, S155, and H178 together coordinate 1-deoxy-D-xylulose 5-phosphate. E133 contributes to the Mn(2+) binding site. G184 is an NADPH binding site. 1-deoxy-D-xylulose 5-phosphate contacts are provided by S191, N196, K197, and E200. E200 is a Mn(2+) binding site.

The protein belongs to the DXR family. Requires Mg(2+) as cofactor. The cofactor is Mn(2+).

The enzyme catalyses 2-C-methyl-D-erythritol 4-phosphate + NADP(+) = 1-deoxy-D-xylulose 5-phosphate + NADPH + H(+). Its pathway is isoprenoid biosynthesis; isopentenyl diphosphate biosynthesis via DXP pathway; isopentenyl diphosphate from 1-deoxy-D-xylulose 5-phosphate: step 1/6. In terms of biological role, catalyzes the NADPH-dependent rearrangement and reduction of 1-deoxy-D-xylulose-5-phosphate (DXP) to 2-C-methyl-D-erythritol 4-phosphate (MEP). In Campylobacter jejuni subsp. doylei (strain ATCC BAA-1458 / RM4099 / 269.97), this protein is 1-deoxy-D-xylulose 5-phosphate reductoisomerase.